Here is a 311-residue protein sequence, read N- to C-terminus: Inositol oxygenase 1 (311 aa).

Residues 1–11 are compositionally biased toward basic and acidic residues; the sequence is MTILIDRHSDQ. The tract at residues 1–29 is disordered; that stretch reads MTILIDRHSDQNDAGDEIVEKNQGNGKEE. Residues R52 and 109-111 contribute to the substrate site; that span reads DES. 3 residues coordinate Fe cation: H122, H147, and D148. Substrate is bound by residues K151 and 168-169; that span reads GD. The Fe cation site is built by H220, H246, and D279. Position 246–247 (246–247) interacts with substrate; that stretch reads HS.

Belongs to the myo-inositol oxygenase family. Fe cation is required as a cofactor. In terms of tissue distribution, expressed in roots, young leaves, stems, flowers and siliques.

The protein localises to the cytoplasm. The enzyme catalyses myo-inositol + O2 = D-glucuronate + H2O + H(+). It functions in the pathway polyol metabolism; myo-inositol degradation into D-glucuronate; D-glucuronate from myo-inositol: step 1/1. Its function is as follows. Catalyzes the oxygenative cleavage of myo-inositol to D-glucuronate. Involved in the biosynthesis of UDP-glucuronic acid (UDP-GlcA), providing nucleotide sugars for cell-wall polymers. May be also involved in plant ascorbate biosynthesis. This Arabidopsis thaliana (Mouse-ear cress) protein is Inositol oxygenase 1 (MIOX1).